A 270-amino-acid chain; its full sequence is Shikimate dehydrogenase (NADP(+)) (270 aa).

Shikimate is bound by residues 15–17 (SLS) and threonine 62. Catalysis depends on lysine 66, which acts as the Proton acceptor. Shikimate is bound by residues asparagine 87 and aspartate 102. Residues 126-130 (GAGGS), 149-154 (NRTVGR), and isoleucine 210 each bind NADP(+). A shikimate-binding site is contributed by tyrosine 212. NADP(+) is bound at residue glycine 233.

Belongs to the shikimate dehydrogenase family. Homodimer.

It carries out the reaction shikimate + NADP(+) = 3-dehydroshikimate + NADPH + H(+). The protein operates within metabolic intermediate biosynthesis; chorismate biosynthesis; chorismate from D-erythrose 4-phosphate and phosphoenolpyruvate: step 4/7. Functionally, involved in the biosynthesis of the chorismate, which leads to the biosynthesis of aromatic amino acids. Catalyzes the reversible NADPH linked reduction of 3-dehydroshikimate (DHSA) to yield shikimate (SA). The protein is Shikimate dehydrogenase (NADP(+)) of Hyphomonas neptunium (strain ATCC 15444).